Reading from the N-terminus, the 359-residue chain is MFGPYSGGGGVPLPQMDADTYVRTIAAMPPHPLAPPPDSPRTPHTYVGFLPVFGDLPPLTGAVLQEPVPVPPEQRADQPVAVATENSAPTRPQLCAPYDDEVEATLRAMETNPAERPSPYFLETTQGGRMSALVRASMIAFMGEFSRKNKLADGTLQRAAYFLDRYLSVTPESDDALQLRLVGATAVFLAAKYEDQYTLRKIDASMVAARCGYTSETRHKMVSIMETEMLAALGFNLGGPTAYTFVEHFTRYYGDGEEEKQLKEAAHRVADGTLLTYGFHRYLPSMVAASSIFLARLHELGHEPWSNDLAELTGYKAIDLMGCVCDIYSQIACPRFALLQGKNKRVCKSTSMQGMNMMA.

The protein belongs to the cyclin family. Cyclin F subfamily.

This chain is Putative cyclin-F1-2 (CYCF1-2), found in Oryza sativa subsp. japonica (Rice).